Consider the following 186-residue polypeptide: MGLKSDSWIRKMSVEKKMIVPFAEEQVGRGVVSYGVSSYGYDIRVGDEFKIFTNIGGTVVDPKNFDEKNVVDFKGDVCIVPPNSFALARTIEYFNMPDNVLAICLGKSTYARCGIIVNVTPFEPGFKGHITIEISNTTPLPAKIYANEGIAQVLFIEGDEPCEVTYADKNGKYQAQEGITLPRILK.

107-112 (KSTYAR) provides a ligand contact to dCTP. Residue glutamate 133 is the Proton donor/acceptor of the active site. DCTP-binding residues include glutamine 152, tyrosine 166, and glutamine 176.

The protein belongs to the dCTP deaminase family. Homotrimer.

The enzyme catalyses dCTP + H2O + H(+) = dUTP + NH4(+). It participates in pyrimidine metabolism; dUMP biosynthesis; dUMP from dCTP (dUTP route): step 1/2. Its function is as follows. Catalyzes the deamination of dCTP to dUTP. The polypeptide is dCTP deaminase (Campylobacter concisus (strain 13826)).